Reading from the N-terminus, the 232-residue chain is Small ribosomal subunit protein uS3 (232 aa).

Positions 39–107 constitute a KH type-2 domain; it reads VRRFLEQRLK…PVHVNIEEVR (69 aa).

Belongs to the universal ribosomal protein uS3 family. Part of the 30S ribosomal subunit. Forms a tight complex with proteins S10 and S14.

Binds the lower part of the 30S subunit head. Binds mRNA in the 70S ribosome, positioning it for translation. The chain is Small ribosomal subunit protein uS3 from Chromohalobacter salexigens (strain ATCC BAA-138 / DSM 3043 / CIP 106854 / NCIMB 13768 / 1H11).